A 320-amino-acid polypeptide reads, in one-letter code: PUP1 protein homolog (320 aa).

2 helical membrane-spanning segments follow: residues 66–85 and 100–119; these read MWGG…AYRY and FVLG…RSMY. A disordered region spans residues 205–320; that stretch reads GGVFNGSPFM…QSGRYGGNRS (116 aa). At S230 the chain carries Phosphoserine. Residues 253–266 are compositionally biased toward polar residues; it reads GDNSSSSSWENIRN. A compositionally biased stretch (basic and acidic residues) spans 267–284; the sequence is TSRDQSQESDASVDHESD.

It belongs to the PUP1 family.

The protein resides in the mitochondrion membrane. The chain is PUP1 protein homolog from Saccharomyces cerevisiae (strain ATCC 204508 / S288c) (Baker's yeast).